The following is a 373-amino-acid chain: Nuclear hormone receptor family member nhr-69 (373 aa).

Positions 3–78 (EEICHICNDK…AGMKSNAIQN (76 aa)) form a DNA-binding region, nuclear receptor. 2 NR C4-type zinc fingers span residues 6–26 (CHICNDKSTGKHYGAISCDGC) and 42–66 (CRFEQNCDVTKNKRNACRACRLQKC). In terms of domain architecture, NR LBD spans 93-344 (EKEDLIDQLV…SLMEELILND (252 aa)).

It belongs to the nuclear hormone receptor family. In terms of assembly, interacts with R-SMAD daf-8. As to expression, expressed in the ASI neurons, hypodermis, and in tail neurons.

The protein localises to the nucleus. Its function is as follows. Orphan nuclear receptor which, in cooperation with R-SMAD daf-8, modulates the Insulin/IGF-1-like signaling (IIS) pathway, perhaps by regulating expression of the potassium channel exp-2, which in turn modulates the secretion of insulin-like peptide daf-28. The sequence is that of Nuclear hormone receptor family member nhr-69 (nhr-69) from Caenorhabditis elegans.